Consider the following 270-residue polypeptide: Interleukin-1 beta (270 aa).

A propeptide spanning residues 1–118 (MATVPEPTSE…VYDDDAFVCD (118 aa)) is cleaved from the precursor.

Belongs to the IL-1 family. In terms of assembly, monomer. In its precursor form, weakly interacts with full-length MEFV; the mature cytokine does not interact at all. Interacts with integrins ITGAV:ITGBV and ITGA5:ITGB1; integrin-binding is required for IL1B signaling. Interacts with cargo receptor TMED10; the interaction is direct and is required for the secretion of IL1B mature form. Interacts with HSP90AB1; the interaction facilitates cargo translocation into the ERGIC. Interacts with HSP90B1; the interaction facilitates cargo translocation into the ERGIC.

The protein resides in the cytoplasm. It localises to the cytosol. Its subcellular location is the secreted. The protein localises to the lysosome. It is found in the extracellular exosome. Functionally, potent pro-inflammatory cytokine. Initially discovered as the major endogenous pyrogen, induces prostaglandin synthesis, neutrophil influx and activation, T-cell activation and cytokine production, B-cell activation and antibody production, and fibroblast proliferation and collagen production. Promotes Th17 differentiation of T-cells. Synergizes with IL12/interleukin-12 to induce IFNG synthesis from T-helper 1 (Th1) cells. Plays a role in angiogenesis by inducing VEGF production synergistically with TNF and IL6. Involved in transduction of inflammation downstream of pyroptosis: its mature form is specifically released in the extracellular milieu by passing through the gasdermin-D (GSDMD) pore. The chain is Interleukin-1 beta (IL1B) from Phoca vitulina richardii (Pacific harbor seal).